The chain runs to 71 residues: DNA-directed RNA polymerase subunit omega (71 aa).

This sequence belongs to the RNA polymerase subunit omega family. As to quaternary structure, the RNAP catalytic core consists of 2 alpha, 1 beta, 1 beta' and 1 omega subunit. When a sigma factor is associated with the core the holoenzyme is formed, which can initiate transcription.

It catalyses the reaction RNA(n) + a ribonucleoside 5'-triphosphate = RNA(n+1) + diphosphate. Functionally, promotes RNA polymerase assembly. Latches the N- and C-terminal regions of the beta' subunit thereby facilitating its interaction with the beta and alpha subunits. This chain is DNA-directed RNA polymerase subunit omega, found in Azoarcus sp. (strain BH72).